A 181-amino-acid polypeptide reads, in one-letter code: Translationally-controlled tumor protein homolog (181 aa).

In terms of domain architecture, TCTP spans 1–181 (MLIFKDAFTD…VKEALVEEKQ (181 aa)).

This sequence belongs to the TCTP family.

Its subcellular location is the cytoplasm. In terms of biological role, involved in calcium binding and microtubule stabilization. This is Translationally-controlled tumor protein homolog from Wuchereria bancrofti.